The chain runs to 285 residues: Protease HtpX homolog (285 aa).

A run of 2 helical transmembrane segments spans residues Thr-7 to Gly-27 and Gly-30 to Asp-50. A Zn(2+)-binding site is contributed by His-131. The active site involves Glu-132. His-135 serves as a coordination point for Zn(2+). Helical transmembrane passes span Ile-146–Gly-166 and Ile-177–Ile-197. Position 202 (Glu-202) interacts with Zn(2+).

The protein belongs to the peptidase M48B family. It depends on Zn(2+) as a cofactor.

Its subcellular location is the cell inner membrane. The protein is Protease HtpX homolog of Burkholderia cenocepacia (strain HI2424).